The primary structure comprises 331 residues: ADP,ATP carrier protein 1, mitochondrial (331 aa).

Solcar repeat units lie at residues 29–122 (KNFA…FKRM), 134–226 (KWFG…LKPV), and 238–320 (ASFA…LQIL). A run of 5 helical transmembrane segments spans residues 31 to 58 (FAID…VKLL), 99 to 123 (TANV…KRMF), 132 to 152 (YWKW…SSLF), 202 to 223 (FNIS…YDSL), and 237 to 257 (FASF…SYPI). Residues R104 and K116 each coordinate ADP. Residue R261 coordinates ADP. An important for transport activity region spans residues 261–266 (RRRMMM). The Nucleotide carrier signature motif motif lies at 261-266 (RRRMMM). A helical membrane pass occupies residues 297-317 (AGANILRAIAGAGVLSGYDQL).

It belongs to the mitochondrial carrier (TC 2.A.29) family. In terms of assembly, monomer.

The protein localises to the mitochondrion inner membrane. The catalysed reaction is ADP(in) + ATP(out) = ADP(out) + ATP(in). The matrix-open state (m-state) is inhibited by the membrane-permeable bongkrekic acid (BKA). The cytoplasmic-open state (c-state) is inhibited by the membrane-impermeable toxic inhibitor carboxyatractyloside (CATR). Its function is as follows. ADP:ATP antiporter that mediates import of ADP into the mitochondrial matrix for ATP synthesis, and export of ATP out to fuel the cell. Cycles between the cytoplasmic-open state (c-state) and the matrix-open state (m-state): operates by the alternating access mechanism with a single substrate-binding site intermittently exposed to either the cytosolic (c-state) or matrix (m-state) side of the inner mitochondrial membrane. This chain is ADP,ATP carrier protein 1, mitochondrial (ANT-G1), found in Triticum aestivum (Wheat).